Consider the following 295-residue polypeptide: Nucleotide-binding protein RBAM_031990 (295 aa).

Glycine 16–threonine 23 is an ATP binding site. A GTP-binding site is contributed by aspartate 67–glycine 70.

This sequence belongs to the RapZ-like family.

Displays ATPase and GTPase activities. In Bacillus velezensis (strain DSM 23117 / BGSC 10A6 / LMG 26770 / FZB42) (Bacillus amyloliquefaciens subsp. plantarum), this protein is Nucleotide-binding protein RBAM_031990.